Here is a 236-residue protein sequence, read N- to C-terminus: 2-C-methyl-D-erythritol 4-phosphate cytidylyltransferase (236 aa).

This sequence belongs to the IspD/TarI cytidylyltransferase family. IspD subfamily. In terms of assembly, homodimer.

The catalysed reaction is 2-C-methyl-D-erythritol 4-phosphate + CTP + H(+) = 4-CDP-2-C-methyl-D-erythritol + diphosphate. It participates in isoprenoid biosynthesis; isopentenyl diphosphate biosynthesis via DXP pathway; isopentenyl diphosphate from 1-deoxy-D-xylulose 5-phosphate: step 2/6. Functionally, catalyzes the formation of 4-diphosphocytidyl-2-C-methyl-D-erythritol from CTP and 2-C-methyl-D-erythritol 4-phosphate (MEP). The polypeptide is 2-C-methyl-D-erythritol 4-phosphate cytidylyltransferase (Escherichia coli O7:K1 (strain IAI39 / ExPEC)).